A 130-amino-acid polypeptide reads, in one-letter code: MGVYHGPDLKKITGGKKRRHRKVKRKYWMGRYPTNTTLAENEKRKIERVRGGNIKVRLRYAAYANVVDPNENVAKKVKILRVLETPANKELARHGIIVKGTKIETELGVAVVTSRPGQDGVINAVLIERK.

The protein belongs to the eukaryotic ribosomal protein eS8 family. In terms of assembly, part of the 30S ribosomal subunit.

In Ignicoccus hospitalis (strain KIN4/I / DSM 18386 / JCM 14125), this protein is Small ribosomal subunit protein eS8.